A 346-amino-acid polypeptide reads, in one-letter code: Large ribosomal subunit protein uL10 (346 aa).

Positions 307-346 (AAAVAKEPEKKEEVKEEEEEEEEEDHSEEDGMAGLGSLFG) are disordered. Over residues 321–337 (KEEEEEEEEEDHSEEDG) the composition is skewed to acidic residues.

Belongs to the universal ribosomal protein uL10 family. As to quaternary structure, part of the 50S ribosomal subunit. Forms part of the ribosomal stalk which helps the ribosome interact with GTP-bound translation factors. Forms both a pentameric L10(L12)2(L12)2 and heptameric L10(L12)2(L12)2(L12)2 complex, where L10 forms an elongated spine to which the L12 dimers bind in a sequential fashion. The proportion of heptameric complexes increases during cell growth.

Functionally, forms part of the ribosomal stalk, playing a central role in the interaction of the ribosome with GTP-bound translation factors. The chain is Large ribosomal subunit protein uL10 from Methanosarcina barkeri (strain Fusaro / DSM 804).